The primary structure comprises 212 residues: Protein G1-like7 (212 aa).

Residues 1–22 are compositionally biased toward low complexity; the sequence is MDPSGPGPSSAAAGGAPAVAAA. Disordered stretches follow at residues 1–34 and 148–212; these read MDPS…RYES and KARG…PSAS. Positions 31-158 constitute an ALOG domain; sequence RYESQKRRDW…ARGIPYEKKK (128 aa). Positions 156–160 match the Nuclear localization signal motif; the sequence is KKKRK. Low complexity predominate over residues 173–182; that stretch reads SGSSSAAAAA. Residues 183-194 show a composition bias toward gly residues; it reads AGGGDTGSGGGA.

The protein belongs to the plant homeotic and developmental regulators ALOG protein family.

The protein localises to the nucleus. In terms of biological role, probable transcription regulator that acts as a developmental regulator by promoting cell growth in response to light. This chain is Protein G1-like7, found in Oryza sativa subsp. indica (Rice).